The chain runs to 211 residues: Small ribosomal subunit protein eS8 (211 aa).

This sequence belongs to the eukaryotic ribosomal protein eS8 family.

This is Small ribosomal subunit protein eS8 (rps8) from Dictyostelium discoideum (Social amoeba).